A 488-amino-acid polypeptide reads, in one-letter code: Probable glycine dehydrogenase (decarboxylating) subunit 2 (488 aa).

Lysine 274 bears the N6-(pyridoxal phosphate)lysine mark.

It belongs to the GcvP family. C-terminal subunit subfamily. As to quaternary structure, the glycine cleavage system is composed of four proteins: P, T, L and H. In this organism, the P 'protein' is a heterodimer of two subunits. Pyridoxal 5'-phosphate is required as a cofactor.

The catalysed reaction is N(6)-[(R)-lipoyl]-L-lysyl-[glycine-cleavage complex H protein] + glycine + H(+) = N(6)-[(R)-S(8)-aminomethyldihydrolipoyl]-L-lysyl-[glycine-cleavage complex H protein] + CO2. Its function is as follows. The glycine cleavage system catalyzes the degradation of glycine. The P protein binds the alpha-amino group of glycine through its pyridoxal phosphate cofactor; CO(2) is released and the remaining methylamine moiety is then transferred to the lipoamide cofactor of the H protein. This chain is Probable glycine dehydrogenase (decarboxylating) subunit 2, found in Listeria monocytogenes serotype 4b (strain F2365).